Reading from the N-terminus, the 32-residue chain is Snaclec (32 aa).

In terms of assembly, dimer; disulfide-linked. Expressed by the venom gland.

The protein localises to the secreted. In terms of biological role, interferes with one step of hemostasis (modulation of platelet aggregation, or coagulation cascade, for example). The polypeptide is Snaclec (Bothrops diporus (Chaco lancehead)).